Here is an 834-residue protein sequence, read N- to C-terminus: Ras GTPase-activating protein 3 (834 aa).

2 consecutive C2 domains span residues Met-1–Phe-112 and Val-123–Tyr-263. The residue at position 2 (Ala-2) is an N-acetylalanine. Phosphotyrosine is present on Tyr-66. Ser-77 is modified (phosphoserine). Position 110 is a phosphothreonine (Thr-110). The region spanning Gly-346–Ile-561 is the Ras-GAP domain. In terms of domain architecture, PH spans Ile-576–Gln-677. The Btk-type zinc finger occupies Asn-679–Gly-715. Positions 687, 698, 699, and 709 each coordinate Zn(2+). Phosphoserine occurs at positions 809 and 833.

In terms of tissue distribution, high levels in brain, lower in spleen and lung.

Its function is as follows. Inhibitory regulator of the Ras-cyclic AMP pathway. May bind inositol tetrakisphosphate (IP4). In Mus musculus (Mouse), this protein is Ras GTPase-activating protein 3 (Rasa3).